A 23-amino-acid polypeptide reads, in one-letter code: Basic phospholipase A2 CB1 (23 aa).

In terms of assembly, heterodimer of an acidic subunit and a basic chain. The acidic subunit is non-toxic, without enzymatic activity and comprises 3 peptides that are cross-linked by 7 disulfide bridges. The basic subunit is toxic, has phospholipase A2 activity and is composed of a single chain. Requires Ca(2+) as cofactor. In terms of processing, contains 7 disulfide bonds. In terms of tissue distribution, expressed by the venom gland.

The protein localises to the secreted. The enzyme catalyses a 1,2-diacyl-sn-glycero-3-phosphocholine + H2O = a 1-acyl-sn-glycero-3-phosphocholine + a fatty acid + H(+). Functionally, snake venom phospholipase A2 (PLA2) that shows presynaptic neurotoxicity. PLA2 catalyzes the calcium-dependent hydrolysis of the 2-acyl groups in 3-sn-phosphoglycerides. In Crotalus basiliscus (Mexican west-coast rattlesnake), this protein is Basic phospholipase A2 CB1.